The following is a 242-amino-acid chain: MKTFHGPTCGTAVSLCLLLFLTSALEEGEITSKVKFPPSSSPSFPRLVMVGTLPDLQEITLCYWFKVNRLKGTLHMFSYATAKKDNELLTLIDEQGDFLFNVHGAPQLKVQCPNKIHIGKWHHVCHTWSSWEGEATIAVDGFHCKGNATGIAVGRTLSQGGLVVLGQDQDSVGGKFDATQSLEGELSELNLWNTVLNHEQIKYLSKCAHPSERHIYGNIIQWDKTQFKAYDGVVLSPNEICA.

The first 24 residues, 1-24, serve as a signal peptide directing secretion; sequence MKTFHGPTCGTAVSLCLLLFLTSA. The Pentraxin (PTX) domain maps to 30–241; it reads ITSKVKFPPS…GVVLSPNEIC (212 aa). Residues Thr-60 and Tyr-63 each coordinate phosphocholine. 2 cysteine pairs are disulfide-bonded: Cys-62-Cys-125 and Cys-112-Cys-144. Residues Asp-85 and Asn-86 each coordinate Ca(2+). N-linked (GlcNAc...) asparagine glycosylation is present at Asn-147. Ca(2+)-binding residues include Gln-169, Asp-170, and Gln-180. Residues Cys-207 and Cys-241 are joined by a disulfide bond.

It belongs to the pentraxin family. As to quaternary structure, homopentamer. Pentraxin (or pentaxin) have a discoid arrangement of 5 non-covalently bound subunits. Ca(2+) is required as a cofactor.

The protein localises to the secreted. Its function is as follows. Might serve the role of immunoglobulins. The sequence is that of C-reactive protein 1.1 from Limulus polyphemus (Atlantic horseshoe crab).